The primary structure comprises 314 residues: Methionyl-tRNA formyltransferase (314 aa).

Position 113-116 (113-116 (SLLP)) interacts with (6S)-5,6,7,8-tetrahydrofolate.

It belongs to the Fmt family.

It carries out the reaction L-methionyl-tRNA(fMet) + (6R)-10-formyltetrahydrofolate = N-formyl-L-methionyl-tRNA(fMet) + (6S)-5,6,7,8-tetrahydrofolate + H(+). In terms of biological role, attaches a formyl group to the free amino group of methionyl-tRNA(fMet). The formyl group appears to play a dual role in the initiator identity of N-formylmethionyl-tRNA by promoting its recognition by IF2 and preventing the misappropriation of this tRNA by the elongation apparatus. This Pseudomonas syringae pv. tomato (strain ATCC BAA-871 / DC3000) protein is Methionyl-tRNA formyltransferase.